Here is a 149-residue protein sequence, read N- to C-terminus: Protein SprT-like (149 aa).

The region spanning 6-147 (LQKLTEDISL…CGKCRGKIKR (142 aa)) is the SprT-like domain. A Zn(2+)-binding site is contributed by histidine 67. Glutamate 68 is an active-site residue. A Zn(2+)-binding site is contributed by histidine 71.

The protein belongs to the SprT family. It depends on Zn(2+) as a cofactor.

It is found in the cytoplasm. The chain is Protein SprT-like from Bacillus velezensis (strain DSM 23117 / BGSC 10A6 / LMG 26770 / FZB42) (Bacillus amyloliquefaciens subsp. plantarum).